A 232-amino-acid chain; its full sequence is 5'-methylthioadenosine/S-adenosylhomocysteine nucleosidase (232 aa).

Residue E12 is the Proton acceptor of the active site. Residues G78, I152, and 173-174 contribute to the substrate site; that span reads ME. D197 serves as the catalytic Proton donor.

This sequence belongs to the PNP/UDP phosphorylase family. MtnN subfamily. Homodimer.

It carries out the reaction S-adenosyl-L-homocysteine + H2O = S-(5-deoxy-D-ribos-5-yl)-L-homocysteine + adenine. The enzyme catalyses S-methyl-5'-thioadenosine + H2O = 5-(methylsulfanyl)-D-ribose + adenine. The catalysed reaction is 5'-deoxyadenosine + H2O = 5-deoxy-D-ribose + adenine. The protein operates within amino-acid biosynthesis; L-methionine biosynthesis via salvage pathway; S-methyl-5-thio-alpha-D-ribose 1-phosphate from S-methyl-5'-thioadenosine (hydrolase route): step 1/2. Catalyzes the irreversible cleavage of the glycosidic bond in both 5'-methylthioadenosine (MTA) and S-adenosylhomocysteine (SAH/AdoHcy) to adenine and the corresponding thioribose, 5'-methylthioribose and S-ribosylhomocysteine, respectively. Also cleaves 5'-deoxyadenosine, a toxic by-product of radical S-adenosylmethionine (SAM) enzymes, into 5-deoxyribose and adenine. Thus, is required for in vivo function of the radical SAM enzymes biotin synthase and lipoic acid synthase, that are inhibited by 5'-deoxyadenosine accumulation. The chain is 5'-methylthioadenosine/S-adenosylhomocysteine nucleosidase from Escherichia coli O7:K1 (strain IAI39 / ExPEC).